Reading from the N-terminus, the 187-residue chain is Large ribosomal subunit protein uL24c (187 aa).

The transit peptide at 1 to 41 (MAALQSSFAGLSTSFFGQRFSPPLSLPPLVKSTEGPCLIQA) directs the protein to the chloroplast.

The protein belongs to the universal ribosomal protein uL24 family. In terms of assembly, part of the 50S ribosomal subunit.

The protein resides in the plastid. Its subcellular location is the chloroplast. Its function is as follows. One of two assembly initiator proteins, it binds directly to the 5'-end of the 23S rRNA, where it nucleates assembly of the 50S subunit. In Nicotiana tabacum (Common tobacco), this protein is Large ribosomal subunit protein uL24c (RPL24).